Consider the following 122-residue polypeptide: Small ribosomal subunit protein uS13 (122 aa).

The tract at residues 96-122 is disordered; the sequence is LPVRGQRTKTNSRTRKGKRKTIAGKKK. Residues 101–122 are compositionally biased toward basic residues; it reads QRTKTNSRTRKGKRKTIAGKKK.

Belongs to the universal ribosomal protein uS13 family. Part of the 30S ribosomal subunit. Forms a loose heterodimer with protein S19. Forms two bridges to the 50S subunit in the 70S ribosome.

Its function is as follows. Located at the top of the head of the 30S subunit, it contacts several helices of the 16S rRNA. In the 70S ribosome it contacts the 23S rRNA (bridge B1a) and protein L5 of the 50S subunit (bridge B1b), connecting the 2 subunits; these bridges are implicated in subunit movement. Contacts the tRNAs in the A and P-sites. The protein is Small ribosomal subunit protein uS13 of Chlamydia trachomatis serovar L2 (strain ATCC VR-902B / DSM 19102 / 434/Bu).